The chain runs to 193 residues: 3-isopropylmalate dehydratase small subunit (193 aa).

This sequence belongs to the LeuD family. LeuD type 1 subfamily. As to quaternary structure, heterodimer of LeuC and LeuD.

It carries out the reaction (2R,3S)-3-isopropylmalate = (2S)-2-isopropylmalate. Its pathway is amino-acid biosynthesis; L-leucine biosynthesis; L-leucine from 3-methyl-2-oxobutanoate: step 2/4. In terms of biological role, catalyzes the isomerization between 2-isopropylmalate and 3-isopropylmalate, via the formation of 2-isopropylmaleate. The protein is 3-isopropylmalate dehydratase small subunit of Bacillus cytotoxicus (strain DSM 22905 / CIP 110041 / 391-98 / NVH 391-98).